Consider the following 289-residue polypeptide: S-methyl-5'-thioadenosine phosphorylase (289 aa).

Residues serine 11, 53–54 (RH), and 86–87 (SA) contribute to the phosphate site. Residue methionine 187 coordinates substrate. Residue threonine 188 participates in phosphate binding. Substrate is bound at residue 211-213 (DYD).

The protein belongs to the PNP/MTAP phosphorylase family. MTAP subfamily. Homohexamer. Dimer of a homotrimer.

The catalysed reaction is S-methyl-5'-thioadenosine + phosphate = 5-(methylsulfanyl)-alpha-D-ribose 1-phosphate + adenine. It participates in amino-acid biosynthesis; L-methionine biosynthesis via salvage pathway; S-methyl-5-thio-alpha-D-ribose 1-phosphate from S-methyl-5'-thioadenosine (phosphorylase route): step 1/1. In terms of biological role, catalyzes the reversible phosphorylation of S-methyl-5'-thioadenosine (MTA) to adenine and 5-methylthioribose-1-phosphate. Involved in the breakdown of MTA, a major by-product of polyamine biosynthesis. Responsible for the first step in the methionine salvage pathway after MTA has been generated from S-adenosylmethionine. Has broad substrate specificity with 6-aminopurine nucleosides as preferred substrates. This chain is S-methyl-5'-thioadenosine phosphorylase, found in Thermosynechococcus vestitus (strain NIES-2133 / IAM M-273 / BP-1).